The following is a 509-amino-acid chain: Probable cytochrome P450 519B1 (509 aa).

A helical transmembrane segment spans residues 1 to 21 (MNLINLILYFILFWIVFDFIR). Cys-456 serves as a coordination point for heme.

The protein belongs to the cytochrome P450 family. It depends on heme as a cofactor.

The protein localises to the membrane. This is Probable cytochrome P450 519B1 (cyp519B1) from Dictyostelium discoideum (Social amoeba).